The chain runs to 349 residues: Core protein VP7 (349 aa).

N-linked (GlcNAc...) asparagine; by host glycosylation occurs at N287.

This sequence belongs to the orbivirus VP7 family. In terms of assembly, homotrimer that assemble in a complex of 260 capsomers on an inner scaffold composed of VP3.

Its subcellular location is the virion. The VP7 protein is one of the five proteins (with VP1, VP3, VP4, and VP6) which form the inner capsid of the virus. This chain is Core protein VP7 (Segment-7), found in Antilocapra americana (Pronghorn).